A 797-amino-acid chain; its full sequence is Speckle targeted PIP5K1A-regulated poly(A) polymerase (797 aa).

The segment at 14-44 adopts a Matrin-type zinc-finger fold; sequence FHCNLCHVNIPNRPSLEDHVKGKKHLHLLRL. Residues 54–126 form the RRM domain; sequence NSVFVSGFKA…LKLRVKPREK (73 aa). Ser-205 contacts ATP. 2 residues coordinate Mg(2+): Asp-216 and Asp-218. Positions 216, 218, 319, 341, 363, and 495 each coordinate UTP. Asn-319 provides a ligand contact to ATP. The PAP-associated domain occupies 421-495; that stretch reads DLCTLLFGFF…NVLDPFELNH (75 aa). Residues 544-787 form a KA1; binds the bulging loops of U6 snRNA but is dispensable for terminal uridylyltransferase activity region; sequence QSEAAASSQP…FLPKMAETIM (244 aa). The disordered stretch occupies residues 611–659; that stretch reads EETQSLDKTDKSGSEMEVNNNRSLEDTNIQVKGEAGKKRPLSVEEGPST. Positions 615 to 624 are enriched in basic and acidic residues; sequence SLDKTDKSGS. Residues 627–640 are compositionally biased toward polar residues; it reads EVNNNRSLEDTNIQ.

This sequence belongs to the DNA polymerase type-B-like family. Associates with the cleavage and polyadenylation specificity factor (CPSF) complex. It depends on Mg(2+) as a cofactor. The cofactor is Mn(2+).

It localises to the nucleus. The protein resides in the nucleolus. Its subcellular location is the nucleus speckle. It catalyses the reaction RNA(n) + UTP = RNA(n)-3'-uridine ribonucleotide + diphosphate. The catalysed reaction is RNA(n) + ATP = RNA(n)-3'-adenine ribonucleotide + diphosphate. Poly(A) polymerase that creates the 3'-poly(A) tail of specific pre-mRNAs. In addition to polyadenylation, it is also required for the 3'-end cleavage of pre-mRNAs: binds to the 3'UTR of targeted pre-mRNAs and promotes the recruitment and assembly of the CPSF complex on the 3'UTR of pre-mRNAs. In addition to adenylyltransferase activity, also has uridylyltransferase activity. However, the ATP ratio is higher than UTP in cells, suggesting that it functions primarily as a poly(A) polymerase. This is Speckle targeted PIP5K1A-regulated poly(A) polymerase (tut1) from Danio rerio (Zebrafish).